Reading from the N-terminus, the 407-residue chain is Expansin-like protein 2 (407 aa).

Positions 1–23 (MKMKNFLSKSLLVLLIGLIGVKS) are cleaved as a signal peptide. The Expansin-like EG45 domain occupies 42–141 (HGNCGYEQLT…KKVSCDVTGN (100 aa)). Disulfide bonds link C45–C75 and C78–C136. 3 N-linked (GlcNAc...) asparagine glycosylation sites follow: N70, N117, and N387.

The protein belongs to the expansin family. Expansin A subfamily.

It is found in the secreted. In terms of biological role, unlikely to encode with a protein with expansin activity. The chain is Expansin-like protein 2 (expl2) from Dictyostelium discoideum (Social amoeba).